The chain runs to 417 residues: MNEQIPHDKSLDNSLTLLKEGYLFIKNRTERYNSDLFQARLLGKNFICMTGAEAAKVFYDTDRFQRQNALPKRVQKSLFGVNAIQGMDGSAHIHRKMLFLSLMTPPHQKRLAELMTEEWKAAVTRWEKADEVVLFEEAKEILCRVACYWAGVPLKETEVKERADDFIDMVDAFGAVGPRHWKGRRARPRAEEWIEVMIEDARAGLLKTTSGTALHEMAFHTQEDGSQLDSRMAAIELINVLRPIVAISYFLVFSALALHEHPKYKEWLRSGNSREREMFVQEVRRYYPFGPFLGALVKKDFVWNNCEFKKGTSVLLDLYGTNHDPRLWDHPDEFRPERFAEREENLFDMIPQGGGHAEKGHRCPGEGITIEVMKASLDFLVHQIEYDVPEQSLHYSLARMPSLPESGFVMSGIRRKS.

Residue Cys363 participates in heme binding.

The protein belongs to the cytochrome P450 family. Requires heme as cofactor.

The catalysed reaction is a 1,2-saturated fatty acid + H2O2 = a 2-hydroxy fatty acid + H2O. It catalyses the reaction a 2,3-saturated fatty acid + H2O2 = a 3-hydroxy fatty acid + H2O. The enzyme catalyses tetradecanoate + H2O2 = (3R)-hydroxytetradecanoate + H2O. It carries out the reaction tetradecanoate + H2O2 = (2R)-hydroxytetradecanoate + H2O. The catalysed reaction is tetradecanoate + H2O2 = (2S)-hydroxytetradecanoate + H2O. Its function is as follows. Catalyzes the alpha- and beta-hydroxylation of myristic acid in the presence of hydrogen peroxide. The polypeptide is Fatty-acid peroxygenase (cypC) (Bacillus subtilis (strain 168)).